The following is a 121-amino-acid chain: Putative iron-sulfur cluster insertion protein ErpA (121 aa).

Residues cysteine 49, cysteine 113, and cysteine 115 each contribute to the iron-sulfur cluster site.

It belongs to the HesB/IscA family. Homodimer. It depends on iron-sulfur cluster as a cofactor.

Required for insertion of 4Fe-4S clusters. This chain is Putative iron-sulfur cluster insertion protein ErpA, found in Verminephrobacter eiseniae (strain EF01-2).